The primary structure comprises 241 residues: Methylthioribulose-1-phosphate dehydratase (241 aa).

Residues 1 to 20 (MSAIKDERNNDHLVQSHDPE) are disordered. Residue Cys-100 coordinates substrate. Residues His-117 and His-119 each contribute to the Zn(2+) site. Glu-146 acts as the Proton donor/acceptor in catalysis. Residue His-202 coordinates Zn(2+).

It belongs to the aldolase class II family. MtnB subfamily. It depends on Zn(2+) as a cofactor.

The protein resides in the cytoplasm. The catalysed reaction is 5-(methylsulfanyl)-D-ribulose 1-phosphate = 5-methylsulfanyl-2,3-dioxopentyl phosphate + H2O. The protein operates within amino-acid biosynthesis; L-methionine biosynthesis via salvage pathway; L-methionine from S-methyl-5-thio-alpha-D-ribose 1-phosphate: step 2/6. Its function is as follows. Catalyzes the dehydration of methylthioribulose-1-phosphate (MTRu-1-P) into 2,3-diketo-5-methylthiopentyl-1-phosphate (DK-MTP-1-P). This is Methylthioribulose-1-phosphate dehydratase from Blastomyces gilchristii (strain SLH14081) (Blastomyces dermatitidis).